An 867-amino-acid chain; its full sequence is Zinc finger protein zfp-1 (867 aa).

A PHD-type 1 zinc finger spans residues 5–57; the sequence is VGGCCVCADENGWTDNPLIYCDGENCEVAVHQGCYGIQEVPEGEWFCAKCTKA. The segment at 69 to 102 adopts a C2HC pre-PHD-type 2 zinc-finger fold; sequence TFCCQLCPFDYGALKKTDRNGWAHVICALYIPEV. The extended PHD2 domain (ePHD2) stretch occupies residues 69–186; it reads TFCCQLCPFD…KYCGYCENHL (118 aa). The PHD-type 2 zinc-finger motif lies at 125 to 186; it reads KLCYICNEER…KYCGYCENHL (62 aa). 4 disordered regions span residues 267–311, 440–477, 503–586, and 753–773; these read GSTV…SLSS, KNDM…GKSP, ADRT…QSNR, and SSGA…STAG. Polar residues predominate over residues 285 to 311; it reads PLTTSSRSSVAQDPSPPLTINKNSLSS. A compositionally biased stretch (basic and acidic residues) spans 503–512; it reads ADRTAAERRA. Polar residues predominate over residues 516–527; the sequence is QSQPSTSTNGGP. The segment covering 538 to 550 has biased composition (low complexity); the sequence is HTNSTNSTNHQNN. Polar residues predominate over residues 551–573; the sequence is GLTQNAPASTSMQAGTSSNDGVI. The span at 574 to 585 shows a compositional bias: low complexity; sequence SQNGTSSTSQSN. Over residues 758 to 771 the composition is skewed to polar residues; sequence VNSNIQNHRATPST.

In terms of assembly, multimer; in vitro. Interacts (via C-terminus) with dot-1.1 to form a heterodimer known as the zfp-1-dot-1.1 complex or DotCom complex. As to expression, isoform a: Expressed at high levels in maturing oocytes, but at low levels in the rest of the germ line (at protein level). Isoform a: Not expressed in the pharynx, germ line and tail. Isoform c: Not expressed in the germ line (at protein level). Isoform c: Uniformly expressed.

The protein resides in the nucleus. The protein localises to the chromosome. Recruits the histone methyltransferase dot-1.1 to chromatin to methylate 'Lys-79' of histone H3 and activate transcription. Recognizes and binds histone H3 methylated at 'Lys-4' (H3K4me) at the promoters of target genes. During stress, the zfp-1-dot-1.1 complex also plays a role in the deubiquitination of histone H2B sites, which negatively modulates the RNA polymerase II-induced transcription of highly expressed genes. In response to stress, binds to the pdk-1 promoter to negatively regulate pdk-1 expression, which negatively modulates daf-16/FOXO-mediated gene expression. Thus, most likely via this mechanism, in response to stress, it confers a protective role against neuronal necrosis. Plays a role in Insulin/IGF-1-like signaling (IIS)- and diet restriction-mediated lifespan extension by controlling daf-16/FOXO and pha-4/FOXA recruitment to target promoters. May negatively regulate the expression of genes required for vulval development. May play a role in axon guidance in D-type motor neurons. May suppress sensitivity to RNAi. Its function is as follows. Required for migration of HSN motor neurons during embryogenesis. The polypeptide is Zinc finger protein zfp-1 (Caenorhabditis elegans).